Reading from the N-terminus, the 716-residue chain is Iron-sulfur clusters transporter atm1, mitochondrial (716 aa).

A mitochondrion-targeting transit peptide spans 1–18 (MAPSIKLSTMATSLHRAH). At 19-123 (GTSALLRRPR…PKGSWGDKAR (105 aa)) the chain is on the mitochondrial matrix side. The tract at residues 57–87 (LFAPNGSAKDESKPAVSTVPKTTGRGPSDPL) is disordered. Residues 124–145 (VLLAIGLLVGGKVLNVQVPFYF) form a helical membrane-spanning segment. Residues 124–414 (VLLAIGLLVG…LGSVYRELRQ (291 aa)) form the ABC transmembrane type-1 domain. The Mitochondrial intermembrane portion of the chain corresponds to 146–168 (REIVDSLNIDFSTTGGSVTAVAG). The chain crosses the membrane as a helical span at residues 169 to 192 (AMILGYGAARVGAVVSQELRNAVF). The Mitochondrial matrix portion of the chain corresponds to 193 to 241 (ASVAQKAIRKVARNTFEHLLNLDLSFHLSKQTGGLTRAIDRGTKGISFL). A helical membrane pass occupies residues 242–265 (LTSMVFHIVPTALEISMVCGILTY). Residue N266 is a topological domain, mitochondrial intermembrane. A helical membrane pass occupies residues 267–287 (FGWQYAALTALTMVSYTAFTI). The Mitochondrial matrix segment spans residues 288–353 (LTTAWRTKFR…NSIKVATSLA (66 aa)). Glutathione-binding positions include 293–297 (RTKFR) and 356–359 (NSGQ). Residues 354–372 (FLNSGQNIIFSSALTVMMY) form a helical membrane-spanning segment. Residues 373–387 (MGAHGVATGQLTVGD) are Mitochondrial intermembrane-facing. The chain crosses the membrane as a helical span at residues 388-409 (LVLINQLVFQLSVPLNFLGSVY). G406 is a glutathione binding site. The Mitochondrial matrix portion of the chain corresponds to 410 to 716 (RELRQSLLDM…KEEVGEKKEA (307 aa)). Residues 449–690 (IEFKDVTFGY…NGVYAQLWRA (242 aa)) enclose the ABC transporter domain. ATP-binding positions include Y458 and 482-493 (GPSGCGKSTLLR). A disordered region spans residues 697–716 (EEGEVSKKGEKEEVGEKKEA). Residues 700–716 (EVSKKGEKEEVGEKKEA) show a composition bias toward basic and acidic residues.

The protein belongs to the ABC transporter superfamily. ABCB family. Heavy Metal importer (TC 3.A.1.210) subfamily. As to quaternary structure, homodimer.

It is found in the mitochondrion inner membrane. Its function is as follows. Performs an essential function in the generation of cytoplasmic iron-sulfur proteins by mediating the ATP-dependent export of Fe/S cluster precursors synthesized by egt-3 and other mitochondrial proteins. Hydrolyzes ATP. Binds glutathione and may function by transporting a glutathione-conjugated iron-sulfur compound. This Neurospora crassa (strain ATCC 24698 / 74-OR23-1A / CBS 708.71 / DSM 1257 / FGSC 987) protein is Iron-sulfur clusters transporter atm1, mitochondrial.